Reading from the N-terminus, the 367-residue chain is Forkhead box protein I1-B (367 aa).

Disordered stretches follow at residues Met-1 to His-21 and Asp-213 to Val-274. The segment at residues Arg-128–Lys-222 is a DNA-binding region (fork-head). Residues Ala-233–Glu-246 are compositionally biased toward basic and acidic residues. The span at Thr-252–Val-274 shows a compositional bias: polar residues.

As to expression, initially localized to the animal hemisphere (the presumptive ectoderm) of early-mid blastula embryos. Becomes restricted to head placodes, excluding the otic placodes, by the tailbud stages.

It is found in the nucleus. Its function is as follows. Transcription factor. Essential for ventral specification of the early cephalic (head) ectoderm during gastrulation, playing a role in the 'non-neural' versus 'neural' cell fate choice. Binds to DNA via the target sequence 5'-[AG]TAAA[CT]A-3', with 5'-ATAAACA-3' being the preferred binding site. This Xenopus laevis (African clawed frog) protein is Forkhead box protein I1-B (foxi1-b).